A 471-amino-acid chain; its full sequence is Argininosuccinate lyase (471 aa).

This sequence belongs to the lyase 1 family. Argininosuccinate lyase subfamily.

Its subcellular location is the cytoplasm. It carries out the reaction 2-(N(omega)-L-arginino)succinate = fumarate + L-arginine. Its pathway is amino-acid biosynthesis; L-arginine biosynthesis; L-arginine from L-ornithine and carbamoyl phosphate: step 3/3. This Ralstonia nicotianae (strain ATCC BAA-1114 / GMI1000) (Ralstonia solanacearum) protein is Argininosuccinate lyase.